The sequence spans 209 residues: MASMGLQVMGIALAVLGWLGAILSCALPMWRVTAFIGSNIVTSQTIWEGLWMNCVVQSTGQMQCKVYDSLLALPQDLQAARALIVICIILAVFGVLLSVVGGKCTNCVDDESSKAKIMIVAGVVFLLAGLLVMVPVSWTANNVIRDFYNPLVASGQKREMGASLYVGWAAAGLLILGGALLCFNCPPRNDKPYSAKYSAARSAPASNYV.

Over 1–9 the chain is Cytoplasmic; sequence MASMGLQVM. Positions 1-103 are interaction with EPHA2; sequence MASMGLQVMG…GVLLSVVGGK (103 aa). The helical transmembrane segment at 10–30 threads the bilayer; that stretch reads GIALAVLGWLGAILSCALPMW. Residues 31-81 lie on the Extracellular side of the membrane; that stretch reads RVTAFIGSNIVTSQTIWEGLWMNCVVQSTGQMQCKVYDSLLALPQDLQAAR. Cysteine 54 and cysteine 64 are joined by a disulfide. The helical transmembrane segment at 82 to 102 threads the bilayer; that stretch reads ALIVICIILAVFGVLLSVVGG. The Cytoplasmic portion of the chain corresponds to 103–117; sequence KCTNCVDDESSKAKI. Residues 118–138 traverse the membrane as a helical segment; that stretch reads MIVAGVVFLLAGLLVMVPVSW. At 139–160 the chain is on the extracellular side; it reads TANNVIRDFYNPLVASGQKREM. The helical transmembrane segment at 161-181 threads the bilayer; sequence GASLYVGWAAAGLLILGGALL. At 182-209 the chain is on the cytoplasmic side; that stretch reads CFNCPPRNDKPYSAKYSAARSAPASNYV. At tyrosine 208 the chain carries Phosphotyrosine; by EPHA2. Residues 208–209 form an interactions with TJP1, TJP2 and TJP3 region; sequence YV.

This sequence belongs to the claudin family. Interacts with EPHA2; phosphorylates CLDN4 and may regulate tight junctions. Directly interacts with TJP1/ZO-1, TJP2/ZO-2 and TJP3/ZO-3. Interacts with CLDN1. Interacts with CLDN8. Phosphorylated. Phosphorylation by EPHA2 is stimulated by EFNA1 and alters interaction with TJP1.

The protein localises to the cell junction. It is found in the tight junction. Its subcellular location is the cell membrane. Its function is as follows. Channel-forming tight junction protein that mediates paracellular chloride transport in the kidney. Plays a critical role in the paracellular reabsorption of filtered chloride in the kidney collecting ducts. Claudins play a major role in tight junction-specific obliteration of the intercellular space, through calcium-independent cell-adhesion activity. This chain is Claudin-4 (CLDN4), found in Bos taurus (Bovine).